An 872-amino-acid chain; its full sequence is G-type lectin S-receptor-like serine/threonine-protein kinase At5g24080 (872 aa).

The signal sequence occupies residues 1–25; that stretch reads MSSFHFYFPSVGLFSFFCFFLVSLA. The Extracellular segment spans residues 26-472; it reads TEPHIGLGSK…SRKSHGLRQK (447 aa). In terms of domain architecture, Bulb-type lectin spans 30 to 149; the sequence is IGLGSKLKAS…EVTAGPTIWQ (120 aa). Asn-49, Asn-117, Asn-208, Asn-219, Asn-261, and Asn-294 each carry an N-linked (GlcNAc...) asparagine glycan. The region spanning 306 to 344 is the EGF-like; atypical domain; that stretch reads VSNPCDIAGICGNGVCNLDRTKKNADCLCLPGSVKLPDQ. 2 disulfides stabilise this stretch: Cys-310/Cys-321 and Cys-316/Cys-332. 3 N-linked (GlcNAc...) asparagine glycosylation sites follow: Asn-353, Asn-367, and Asn-390. The region spanning 360–447 is the PAN domain; it reads CESNINRNGS…PGSTLFVKTR (88 aa). 2 disulfides stabilise this stretch: Cys-400-Cys-424 and Cys-404-Cys-410. Asn-449 and Asn-459 each carry an N-linked (GlcNAc...) asparagine glycan. Residues 473-493 form a helical membrane-spanning segment; the sequence is VLVIPIVVGMLVLVALLGMLL. Residues 494 to 872 are Cytoplasmic-facing; sequence YYNLDRKRTL…TCSYSSMSPR (379 aa). Thr-521 is subject to Phosphothreonine. The Protein kinase domain occupies 530 to 810; the sequence is NNFSQLLGSG…LEGTSDEINL (281 aa). Residues 536 to 544 and Lys-558 each bind ATP; that span reads LGSGGFGTV. The residue at position 603 (Tyr-603) is a Phosphotyrosine. The caM-binding stretch occupies residues 619–637; that stretch reads EQTANLLDWRTRFEIAVAT. Asp-656 serves as the catalytic Proton acceptor. 2 positions are modified to phosphothreonine: Thr-690 and Thr-695.

The protein belongs to the protein kinase superfamily. Ser/Thr protein kinase family.

The protein resides in the cell membrane. It carries out the reaction L-seryl-[protein] + ATP = O-phospho-L-seryl-[protein] + ADP + H(+). The enzyme catalyses L-threonyl-[protein] + ATP = O-phospho-L-threonyl-[protein] + ADP + H(+). This chain is G-type lectin S-receptor-like serine/threonine-protein kinase At5g24080, found in Arabidopsis thaliana (Mouse-ear cress).